A 536-amino-acid chain; its full sequence is Allene oxide synthase, chloroplastic (536 aa).

The transit peptide at 1-58 (MASSALNNLVAVNPNTLSPSPKSTPLPNTFSNLRRVSAFRPIKASLFGDSPIKIPGIT) directs the protein to the chloroplast. Residues Lys-151, His-182, and Lys-186 each contribute to the heme b site. (13S)-hydroperoxy-(9Z,11E)-octadecadienoate-binding residues include Ser-262, Asn-339, and Lys-345. Asn-339 is a (13S)-hydroperoxy-(9Z,11E,15Z)-octadecatrienoate binding site. Residues Lys-487 and Cys-489 each contribute to the heme b site.

This sequence belongs to the cytochrome P450 family. It depends on heme b as a cofactor.

The protein resides in the plastid. Its subcellular location is the chloroplast. The catalysed reaction is (13S)-hydroperoxy-(9Z,11E,15Z)-octadecatrienoate = (9Z,13S,15Z)-12,13-epoxyoctadeca-9,11,15-trienoate + H2O. It catalyses the reaction (13S)-hydroperoxy-(9Z,11E)-octadecadienoate = (9Z,13S)-12,13-epoxyoctadeca-9,11-dienoate + H2O. It functions in the pathway lipid metabolism; oxylipin biosynthesis. Functionally, cytochrome P450 enzyme involved in the biosynthesis of oxylipin jasmonates, important phytohormones acting as growth regulators and signaling molecules for plant defense. Functions as an allene oxide synthase that converts hydroperoxy fatty acids to unstable allene epoxides. Catalyzes the dehydration of 13-HPOTE ((13S)-hydroperoxy-(9Z,11E,15Z)-octadecatrienoate), as well as 13-HPODE ((13S)-hydroperoxy-(9Z,11E)-octadecadienoate). The chain is Allene oxide synthase, chloroplastic (CYP74A) from Linum usitatissimum (Flax).